The sequence spans 613 residues: Portal protein (613 aa).

The interval 577-613 is disordered; the sequence is ATGGDHGIRQAPSARGDAEPDHAKSKPARDPPPGAGS. Basic and acidic residues predominate over residues 592 to 605; sequence GDAEPDHAKSKPAR.

The protein belongs to the herpesviridae portal protein family. As to quaternary structure, homododecamerizes. Interacts with terminase subunits TRM1 and TRM3.

Its subcellular location is the virion. The protein localises to the host nucleus. Its function is as follows. Forms a portal in the viral capsid through which viral DNA is translocated during DNA packaging. Assembles as a dodecamer at a single fivefold axe of the T=16 icosahedric capsid. Binds to the molecular motor that translocates the viral DNA, termed terminase. The protein is Portal protein of Homo sapiens (Human).